The following is a 91-amino-acid chain: Sec-independent protein translocase protein TatA (91 aa).

Residues 1–21 traverse the membrane as a helical segment; it reads MGIFDWKHWIVILIVVVLVFG. The segment at 42–91 is disordered; that stretch reads AMNDDDKPAEQPAPQPQQAQAAPQGSPLNQPHTIDAQAHKVDEPIRKDQV. Positions 51–65 are enriched in low complexity; the sequence is EQPAPQPQQAQAAPQ. Positions 78–91 are enriched in basic and acidic residues; that stretch reads QAHKVDEPIRKDQV.

The protein belongs to the TatA/E family. As to quaternary structure, the Tat system comprises two distinct complexes: a TatABC complex, containing multiple copies of TatA, TatB and TatC subunits, and a separate TatA complex, containing only TatA subunits. Substrates initially bind to the TatABC complex, which probably triggers association of the separate TatA complex to form the active translocon.

The protein localises to the cell inner membrane. In terms of biological role, part of the twin-arginine translocation (Tat) system that transports large folded proteins containing a characteristic twin-arginine motif in their signal peptide across membranes. TatA could form the protein-conducting channel of the Tat system. In Pseudomonas savastanoi pv. phaseolicola (strain 1448A / Race 6) (Pseudomonas syringae pv. phaseolicola (strain 1448A / Race 6)), this protein is Sec-independent protein translocase protein TatA.